The sequence spans 569 residues: Ribosome-inactivating protein SNAI' (569 aa).

A signal peptide spans 1 to 28; sequence MKVVATILYLVVLAICGLGIHGAHPTHS. N-linked (GlcNAc...) asparagine glycosylation occurs at Asn-40. The active site involves Glu-201. 3 cysteine pairs are disulfide-bonded: Cys-286-Cys-311, Cys-328-Cys-347, and Cys-369-Cys-381. 2 consecutive Ricin B-type lectin domains span residues 315–435 and 437–565; these read EEVT…WIVG and VEPL…WIAS. A 1-alpha repeat occupies 325-365; sequence DGFCAEVKNGDEKDGTPVQLSSCGEQSNQQWTFSTDGTIQS. A 1-beta repeat occupies 366 to 401; the sequence is LGKCLTTSSSVMIYNCKVVPPESTKWVVSIDGTITN. A 1-gamma repeat occupies 404–436; the sequence is SGLVLTAPKAAEGTLVSLEKNVHAARQGWIVGN. One copy of the 2-alpha repeat lies at 448–488; the sequence is EQMCLETNPGNNDVSLGDCSVKSASKVDQKWALYGDGTIRV. Cystine bridges form between Cys-451–Cys-466 and Cys-495–Cys-512. Residues 492–530 form a 2-beta repeat; it reads RSLCVTSEGKSSNEPIIILKCLGWANQRWVFNTDGTISN. One copy of the 2-gamma repeat lies at 533 to 566; the sequence is SKLVMHVDQNDVPLRKIILSHPSGTSNQQWIAST.

It in the N-terminal section; belongs to the ribosome-inactivating protein family. Type 2 RIP subfamily. As to quaternary structure, disulfide-linked dimer of A and B chains.

The enzyme catalyses Endohydrolysis of the N-glycosidic bond at one specific adenosine on the 28S rRNA.. In terms of biological role, the A chain is responsible for inhibiting protein synthesis through the catalytic inactivation of 60S ribosomal subunits by removing adenine from position 4,324 of 28S rRNA. The B chain binds to cell receptors and probably facilitates the entry into the cell of the A chain; B chains are also responsible for cell agglutination (lectin activity). Agglutination is inhibited by Neu5Ac(alpha2,6)lactose, and N-linked glycoproteins such as fetuin and orosomucoid. This is Ribosome-inactivating protein SNAI' from Sambucus nigra (European elder).